Reading from the N-terminus, the 464-residue chain is 2-oxoadipate dioxygenase/decarboxylase (464 aa).

Positions 70, 74, and 226 each coordinate 2-oxoadipate. His-70 contributes to the Fe(2+) binding site. Residues His-226 and Glu-294 each coordinate Fe(2+). Val-402 contacts 2-oxoadipate.

It belongs to the 2-oxoadipate dioxygenase/decarboxylase family. It depends on Fe(2+) as a cofactor.

It carries out the reaction 2-oxoadipate + O2 = (R)-2-hydroxyglutarate + CO2. The protein operates within amino-acid degradation. Inhibited by EDTA. Its function is as follows. Catalyzes the decarboxylation and hydroxylation of 2-oxoadipate (2OA) to form D-2-hydroxyglutarate (D-2-HGA). Is specific for 2-oxoadipate. Is involved in a D-lysine catabolic pathway. This chain is 2-oxoadipate dioxygenase/decarboxylase, found in Pseudomonas putida (strain ATCC 47054 / DSM 6125 / CFBP 8728 / NCIMB 11950 / KT2440).